A 346-amino-acid polypeptide reads, in one-letter code: Methylthioribose-1-phosphate isomerase (346 aa).

Residues 48 to 50 (RGA), arginine 91, and glutamine 196 each bind substrate. The active-site Proton donor is the aspartate 237. 247–248 (NK) contributes to the substrate binding site.

Belongs to the eIF-2B alpha/beta/delta subunits family. MtnA subfamily.

It carries out the reaction 5-(methylsulfanyl)-alpha-D-ribose 1-phosphate = 5-(methylsulfanyl)-D-ribulose 1-phosphate. It functions in the pathway amino-acid biosynthesis; L-methionine biosynthesis via salvage pathway; L-methionine from S-methyl-5-thio-alpha-D-ribose 1-phosphate: step 1/6. Functionally, catalyzes the interconversion of methylthioribose-1-phosphate (MTR-1-P) into methylthioribulose-1-phosphate (MTRu-1-P). The chain is Methylthioribose-1-phosphate isomerase from Thermosipho melanesiensis (strain DSM 12029 / CIP 104789 / BI429).